Consider the following 235-residue polypeptide: Calcium-activated potassium channel subunit beta-2 (235 aa).

Residues 1–45 are ball and chain; sequence MFIWTSGRTSSSYRHDEKRNIYQKIRDHDLLDKRKTVTALKAGED. Residues 1-46 lie on the Cytoplasmic side of the membrane; the sequence is MFIWTSGRTSSSYRHDEKRNIYQKIRDHDLLDKRKTVTALKAGEDR. The helical transmembrane segment at 47–67 threads the bilayer; the sequence is AILLGLAMMVCSIMMYFLLGI. Topologically, residues 68–194 are extracellular; that stretch reads TLLRSYMQSV…VILTKLYSSN (127 aa). N-linked (GlcNAc...) asparagine glycans are attached at residues N88, N96, and N119. The helical transmembrane segment at 195-215 threads the bilayer; the sequence is VLFHSLFWPTCMMAGGVAIVA. Topologically, residues 216–235 are cytoplasmic; that stretch reads MVKLTQYLSLLCERIQRINR.

Belongs to the KCNMB (TC 8.A.14.1) family. KCNMB2 subfamily. Interacts with KCNMA1 tetramer. There are probably 4 molecules of KCMNB2 per KCNMA1 tetramer. Post-translationally, N-glycosylated. As to expression, expressed in kidney, heart and brain. Highly expressed in ovary. Expressed at low level in other tissues.

It localises to the membrane. Regulatory subunit of the calcium activated potassium KCNMA1 (maxiK) channel. Modulates the calcium sensitivity and gating kinetics of KCNMA1, thereby contributing to KCNMA1 channel diversity. Acts as a negative regulator that confers rapid and complete inactivation of KCNMA1 channel complex. May participate in KCNMA1 inactivation in chromaffin cells of the adrenal gland or in hippocampal CA1 neurons. This Homo sapiens (Human) protein is Calcium-activated potassium channel subunit beta-2 (KCNMB2).